A 360-amino-acid polypeptide reads, in one-letter code: Photosystem II protein D1 (360 aa).

The next 3 helical transmembrane spans lie at 29–46 (YIGW…TATS), 118–133 (HFLL…EWEL), and 142–156 (WIFV…AASA). His-118 serves as a coordination point for chlorophyll a. Tyr-126 contributes to the pheophytin a binding site. [CaMn4O5] cluster is bound by residues Asp-170 and Glu-189. A helical membrane pass occupies residues 197–218 (FHMAGVAGVFGGSLFSAMHGSL). His-198 lines the chlorophyll a pocket. A quinone contacts are provided by residues His-215 and 264 to 265 (SF). His-215 serves as a coordination point for Fe cation. Residue His-272 participates in Fe cation binding. A helical transmembrane segment spans residues 274–288 (FLAAWPVVGIWLTAL). [CaMn4O5] cluster-binding residues include His-332, Glu-333, Asp-342, and Ala-344. Residues 345-360 (SNEVLPVAVNAPAVNG) constitute a propeptide that is removed on maturation.

It belongs to the reaction center PufL/M/PsbA/D family. As to quaternary structure, PSII is composed of 1 copy each of membrane proteins PsbA, PsbB, PsbC, PsbD, PsbE, PsbF, PsbH, PsbI, PsbJ, PsbK, PsbL, PsbM, PsbT, PsbX, PsbY, PsbZ, Psb30/Ycf12, at least 3 peripheral proteins of the oxygen-evolving complex and a large number of cofactors. It forms dimeric complexes. Requires The D1/D2 heterodimer binds P680, chlorophylls that are the primary electron donor of PSII, and subsequent electron acceptors. It shares a non-heme iron and each subunit binds pheophytin, quinone, additional chlorophylls, carotenoids and lipids. D1 provides most of the ligands for the Mn4-Ca-O5 cluster of the oxygen-evolving complex (OEC). There is also a Cl(-1) ion associated with D1 and D2, which is required for oxygen evolution. The PSII complex binds additional chlorophylls, carotenoids and specific lipids. as cofactor. Tyr-161 forms a radical intermediate that is referred to as redox-active TyrZ, YZ or Y-Z. Post-translationally, C-terminally processed by CTPA; processing is essential to allow assembly of the oxygen-evolving complex and thus photosynthetic growth.

It localises to the plastid. The protein localises to the chloroplast thylakoid membrane. The catalysed reaction is 2 a plastoquinone + 4 hnu + 2 H2O = 2 a plastoquinol + O2. Functionally, photosystem II (PSII) is a light-driven water:plastoquinone oxidoreductase that uses light energy to abstract electrons from H(2)O, generating O(2) and a proton gradient subsequently used for ATP formation. It consists of a core antenna complex that captures photons, and an electron transfer chain that converts photonic excitation into a charge separation. The D1/D2 (PsbA/PsbD) reaction center heterodimer binds P680, the primary electron donor of PSII as well as several subsequent electron acceptors. This is Photosystem II protein D1 from Heterosigma akashiwo (Chromophytic alga).